The primary structure comprises 91 residues: Large ribosomal subunit protein uL22 (91 aa).

This sequence belongs to the universal ribosomal protein uL22 family. Part of the 50S ribosomal subunit.

Its function is as follows. This protein binds specifically to 23S rRNA; its binding is stimulated by other ribosomal proteins, e.g. L4, L17, and L20. It is important during the early stages of 50S assembly. It makes multiple contacts with different domains of the 23S rRNA in the assembled 50S subunit and ribosome. In terms of biological role, the globular domain of the protein is located near the polypeptide exit tunnel on the outside of the subunit, while an extended beta-hairpin is found that lines the wall of the exit tunnel in the center of the 70S ribosome. This chain is Large ribosomal subunit protein uL22 (rplV), found in Ash yellows phytoplasma.